The chain runs to 298 residues: Sulfofructose kinase (298 aa).

6-deoxy-6-sulfo-D-fructose-binding residues include Asp-13, Lys-27, Gly-39, Ser-95, and Arg-138. Residues Thr-212, Gly-214, Gly-217, and Gly-243 each coordinate ATP. Residue Asp-244 coordinates 6-deoxy-6-sulfo-D-fructose.

It belongs to the carbohydrate kinase PfkB family. Homodimer.

It catalyses the reaction 6-deoxy-6-sulfo-D-fructose + ATP = 6-deoxy-6-sulfo-D-fructose 1-phosphate + ADP + H(+). With respect to regulation, strongly inhibited by ADP. Activated by sulfoquinovose (SQ), sulfolactaldehyde (SLA) and dihydroxyacetone phosphate (DHAP) (through effects on KM) and by fructose 6-phosphate (F6P), fructose bisphosphate (FBP), phosphoenolpyruvate (PEP) and citrate (through effects on kcat/KM). In terms of biological role, phosphorylates 6-deoxy-6-sulfo-D-fructose (SF) to 6-deoxy-6-sulfo-D-fructose 1-phosphate (SFP). Cannot phosphorylate fructose 6-phosphate. This Escherichia coli (strain K12) protein is Sulfofructose kinase (yihV).